Reading from the N-terminus, the 690-residue chain is Elongation factor G (690 aa).

A tr-type G domain is found at 8–283 (DKYRNIGIMA…AVVDFLPSPL (276 aa)). Residues 17 to 24 (AHIDAGKT), 81 to 85 (DTPGH), and 135 to 138 (NKLD) each bind GTP.

The protein belongs to the TRAFAC class translation factor GTPase superfamily. Classic translation factor GTPase family. EF-G/EF-2 subfamily.

The protein localises to the cytoplasm. In terms of biological role, catalyzes the GTP-dependent ribosomal translocation step during translation elongation. During this step, the ribosome changes from the pre-translocational (PRE) to the post-translocational (POST) state as the newly formed A-site-bound peptidyl-tRNA and P-site-bound deacylated tRNA move to the P and E sites, respectively. Catalyzes the coordinated movement of the two tRNA molecules, the mRNA and conformational changes in the ribosome. This chain is Elongation factor G, found in Zymomonas mobilis subsp. mobilis (strain ATCC 31821 / ZM4 / CP4).